Consider the following 362-residue polypeptide: ATPase ARSA2 (362 aa).

Residue K27–T34 participates in ATP binding. Residue D58 is part of the active site. ATP-binding residues include E235 and N262.

The protein belongs to the arsA ATPase family. In terms of assembly, homodimer. Interacts with SEC61B.

The protein localises to the cytoplasm. It is found in the cytosol. The protein resides in the endoplasmic reticulum. ATPase required for the post-translational delivery of tail-anchored (TA) proteins to the endoplasmic reticulum. Recognizes and selectively binds the transmembrane domain of TA proteins in the cytosol. This complex then targets to the endoplasmic reticulum by membrane-bound receptors, where the tail-anchored protein is released for insertion. This process is regulated by ATP binding and hydrolysis. ATP binding drives the homodimer towards the closed dimer state, facilitating recognition of newly synthesized TA membrane proteins. ATP hydrolysis is required for insertion. Subsequently, the homodimer reverts towards the open dimer state, lowering its affinity for the membrane-bound receptor, and returning it to the cytosol to initiate a new round of targeting. This Chlamydomonas reinhardtii (Chlamydomonas smithii) protein is ATPase ARSA2.